A 142-amino-acid polypeptide reads, in one-letter code: MVLSAADKSNVQAAWGKVGGHAADYGAEALERMFLSFPTTKTYFPHFDLSHGSAQVKGHGAKVAAALTKAVGHLDDLPGALSELSDLHAHKLRVDPVNFKLLSHSLLVTLASHLPNDFTPAVHASLDKFFANVSTVLTSKYR.

The Globin domain occupies 2–142; the sequence is VLSAADKSNV…VSTVLTSKYR (141 aa). His-59 is a binding site for O2. His-88 contributes to the heme b binding site.

Belongs to the globin family. Heterotetramer of two alpha chains and two beta chains. As to expression, red blood cells.

In terms of biological role, involved in oxygen transport from the lung to the various peripheral tissues. The protein is Hemoglobin subunit alpha-3 of Bubalus bubalis (Domestic water buffalo).